Reading from the N-terminus, the 220-residue chain is tRNA (guanine-N(7)-)-methyltransferase (220 aa).

E46, D71, D100, and D122 together coordinate S-adenosyl-L-methionine. Residue D122 is part of the active site. Residues K126, D158, and 196–199 (TEYE) each bind substrate.

The protein belongs to the class I-like SAM-binding methyltransferase superfamily. TrmB family.

It carries out the reaction guanosine(46) in tRNA + S-adenosyl-L-methionine = N(7)-methylguanosine(46) in tRNA + S-adenosyl-L-homocysteine. The protein operates within tRNA modification; N(7)-methylguanine-tRNA biosynthesis. In terms of biological role, catalyzes the formation of N(7)-methylguanine at position 46 (m7G46) in tRNA. This is tRNA (guanine-N(7)-)-methyltransferase from Malacoplasma penetrans (strain HF-2) (Mycoplasma penetrans).